The chain runs to 240 residues: Serine protease SplB (240 aa).

The first 36 residues, 1–36, serve as a signal peptide directing secretion; that stretch reads MNKNVVIKSLAALTILTSVTGIGTTLVEEVQQTAKA. Catalysis depends on charge relay system residues H75, D113, and S193.

The protein belongs to the peptidase S1B family.

It is found in the secreted. Its function is as follows. Serine protease that cleaves specifically after the sequence Trp-Glu-Leu-Gln. In Staphylococcus aureus (strain USA300), this protein is Serine protease SplB (splB).